Reading from the N-terminus, the 341-residue chain is Lipoyl synthase (341 aa).

[4Fe-4S] cluster is bound by residues Cys85, Cys90, Cys96, Cys111, Cys115, Cys118, and Ser325. Residues 97–314 enclose the Radical SAM core domain; it reads FSGGTATFMI…AEEGYKMGFK (218 aa).

It belongs to the radical SAM superfamily. Lipoyl synthase family. [4Fe-4S] cluster is required as a cofactor.

The protein resides in the cytoplasm. The enzyme catalyses [[Fe-S] cluster scaffold protein carrying a second [4Fe-4S](2+) cluster] + N(6)-octanoyl-L-lysyl-[protein] + 2 oxidized [2Fe-2S]-[ferredoxin] + 2 S-adenosyl-L-methionine + 4 H(+) = [[Fe-S] cluster scaffold protein] + N(6)-[(R)-dihydrolipoyl]-L-lysyl-[protein] + 4 Fe(3+) + 2 hydrogen sulfide + 2 5'-deoxyadenosine + 2 L-methionine + 2 reduced [2Fe-2S]-[ferredoxin]. It participates in protein modification; protein lipoylation via endogenous pathway; protein N(6)-(lipoyl)lysine from octanoyl-[acyl-carrier-protein]: step 2/2. Functionally, catalyzes the radical-mediated insertion of two sulfur atoms into the C-6 and C-8 positions of the octanoyl moiety bound to the lipoyl domains of lipoate-dependent enzymes, thereby converting the octanoylated domains into lipoylated derivatives. The sequence is that of Lipoyl synthase from Pseudomonas fluorescens (strain SBW25).